The chain runs to 217 residues: MHRTMAVTAVLVLSAAGAAHAWGGLFNRFSSDMLANLGYGRSPYRHYPYGQEPEEVYAEALEGNRLDDVIDEPGHCYSAPCTTNGDCCRGLLCLDTEDGGRCLPAFAGRKLGEICNRENQCDAGLVCEEVVPGEMHVCRPPTAGRKQYNEDCNSSSECDVTRGLCCIMQRRHRQKPRKSCGYFKEPLVCIGPVATDQIREFVQHTAGEKRIGVYRLH.

The signal sequence occupies residues 1–21; sequence MHRTMAVTAVLVLSAAGAAHA. Positions 22 to 208 are excised as a propeptide; the sequence is WGGLFNRFSS…REFVQHTAGE (187 aa).

ITG-like peptide: Expressed in corpora cardiaca (CC), corpora allata (CA), antennal lobe (AL) and gnathal ganglion (GNG) (at protein level). Expression in AL detected in all animals, expression in GNG detected in most animals and in CA and CC detected in few animals (at protein level).

The protein localises to the secreted. The protein is ITG-like peptide of Agrotis ipsilon (Black cutworm moth).